Reading from the N-terminus, the 455-residue chain is 3-isopropylmalate dehydratase large subunit (455 aa).

Residues Cys-336, Cys-396, and Cys-399 each contribute to the [4Fe-4S] cluster site.

It belongs to the aconitase/IPM isomerase family. LeuC type 1 subfamily. As to quaternary structure, heterodimer of LeuC and LeuD. It depends on [4Fe-4S] cluster as a cofactor.

It catalyses the reaction (2R,3S)-3-isopropylmalate = (2S)-2-isopropylmalate. It functions in the pathway amino-acid biosynthesis; L-leucine biosynthesis; L-leucine from 3-methyl-2-oxobutanoate: step 2/4. Functionally, catalyzes the isomerization between 2-isopropylmalate and 3-isopropylmalate, via the formation of 2-isopropylmaleate. The chain is 3-isopropylmalate dehydratase large subunit from Staphylococcus aureus (strain MRSA252).